We begin with the raw amino-acid sequence, 92 residues long: Co-chaperonin GroES (92 aa).

The protein belongs to the GroES chaperonin family. As to quaternary structure, heptamer of 7 subunits arranged in a ring. Interacts with the chaperonin GroEL.

It is found in the cytoplasm. Functionally, together with the chaperonin GroEL, plays an essential role in assisting protein folding. The GroEL-GroES system forms a nano-cage that allows encapsulation of the non-native substrate proteins and provides a physical environment optimized to promote and accelerate protein folding. GroES binds to the apical surface of the GroEL ring, thereby capping the opening of the GroEL channel. The chain is Co-chaperonin GroES from Methanosarcina mazei (strain ATCC BAA-159 / DSM 3647 / Goe1 / Go1 / JCM 11833 / OCM 88) (Methanosarcina frisia).